The primary structure comprises 311 residues: Glutamyl-Q tRNA(Asp) synthetase (311 aa).

L-glutamate contacts are provided by residues 14 to 18 (RYAPS) and Glu50. The 'HIGH' region motif lies at 17–27 (PSPSGDLHLGN). Zn(2+)-binding residues include Cys104, Cys106, Tyr125, and Cys129. The L-glutamate site is built by Tyr186 and Arg204. The short motif at 242–246 (RLAKR) is the 'KMSKS' region element. Lys245 lines the ATP pocket.

Belongs to the class-I aminoacyl-tRNA synthetase family. GluQ subfamily. Zn(2+) serves as cofactor.

Catalyzes the tRNA-independent activation of glutamate in presence of ATP and the subsequent transfer of glutamate onto a tRNA(Asp). Glutamate is transferred on the 2-amino-5-(4,5-dihydroxy-2-cyclopenten-1-yl) moiety of the queuosine in the wobble position of the QUC anticodon. The protein is Glutamyl-Q tRNA(Asp) synthetase of Nocardia farcinica (strain IFM 10152).